The chain runs to 238 residues: tRNA (guanine-N(7)-)-methyltransferase (238 aa).

Residues E68, E93, D121, and D143 each contribute to the S-adenosyl-L-methionine site. Residue D143 is part of the active site. Residues K147, D179, and 216–219 (TRYE) each bind substrate.

Belongs to the class I-like SAM-binding methyltransferase superfamily. TrmB family.

The enzyme catalyses guanosine(46) in tRNA + S-adenosyl-L-methionine = N(7)-methylguanosine(46) in tRNA + S-adenosyl-L-homocysteine. It functions in the pathway tRNA modification; N(7)-methylguanine-tRNA biosynthesis. Its function is as follows. Catalyzes the formation of N(7)-methylguanine at position 46 (m7G46) in tRNA. The sequence is that of tRNA (guanine-N(7)-)-methyltransferase from Paramagnetospirillum magneticum (strain ATCC 700264 / AMB-1) (Magnetospirillum magneticum).